The following is a 156-amino-acid chain: Arginine repressor (156 aa).

It belongs to the ArgR family.

It localises to the cytoplasm. The protein operates within amino-acid biosynthesis; L-arginine biosynthesis [regulation]. Its function is as follows. Regulates arginine biosynthesis genes. The protein is Arginine repressor of Yersinia pseudotuberculosis serotype I (strain IP32953).